Consider the following 74-residue polypeptide: Cecropin-P2 (74 aa).

A signal peptide spans 1–13 (MIFIYLLVQTAES). A propeptide spans 45 to 74 (RRRFVVQQDTISPRLEVDERFLPNSVQEQI) (removed in mature form).

It belongs to the cecropin family. As to expression, expressed in the body wall, intestine, uterus and ovary.

It localises to the secreted. Has antibacterial activity against several Gram-positive and Gram-negative bacteria. Is weakly active against yeasts. Acts by a nonpore mechanism. In Ascaris suum (Pig roundworm), this protein is Cecropin-P2 (ASCEC-2).